The primary structure comprises 544 residues: WD repeat-containing protein 25 (544 aa).

2 disordered regions span residues 17-74 and 183-208; these read DSDS…EDPG and QRQA…GRAP. Over residues 30 to 39 the composition is skewed to polar residues; that stretch reads FNATGQQKDT. WD repeat units follow at residues 244–286, 290–329, 330–373, 375–420, 424–463, 469–510, and 513–544; these read GHRG…HCLQ, LHTE…QLFS, GRSD…RSYK, TIQQ…KISN, HERF…RMSR, GHKV…RACT, and GHTQ…KIWH.

As to expression, expressed in heart, muscle, testis, ovary, uterus and prostate.

The sequence is that of WD repeat-containing protein 25 from Homo sapiens (Human).